Consider the following 576-residue polypeptide: Putative diflavin flavoprotein A 1 (576 aa).

The tract at residues 48 to 240 (RNGTTYNSFL…LAIKTVATGH (193 aa)) is zinc metallo-hydrolase. 6 residues coordinate Fe cation: His97, Glu99, Asp101, His164, Asp183, and His240. Residues 269-431 (VALFYAEDYG…DLEKALGRIS (163 aa)) form the Flavodoxin-like domain. A flavodoxin-reductase-like region spans residues 432-576 (TGLYIITTKK…VHHRKVGNHY (145 aa)).

This sequence in the N-terminal section; belongs to the zinc metallo-hydrolase group 3 family. In the C-terminal section; belongs to the flavodoxin reductase family. Fe cation is required as a cofactor.

Its function is as follows. Mediates electron transfer from NADH to oxygen, reducing it to water. This modular protein has 3 redox cofactors, in other organisms the same activity requires 2 or 3 proteins. In Nostoc sp. (strain PCC 7120 / SAG 25.82 / UTEX 2576), this protein is Putative diflavin flavoprotein A 1 (dfa1).